The chain runs to 465 residues: RuvB-like helicase 2 (465 aa).

72–79 (GPPSTGKT) provides a ligand contact to ATP.

The protein belongs to the RuvB family. May form heterododecamers with RVB1. Component of the SWR1 chromatin remodeling complex, the INO80 chromatin remodeling complex, and of the R2TP complex. Interacts with dil1.

The protein resides in the nucleus. It catalyses the reaction ATP + H2O = ADP + phosphate + H(+). Functionally, DNA helicase which participates in several chromatin remodeling complexes, including the SWR1 and the INO80 complexes. The SWR1 complex mediates the ATP-dependent exchange of histone H2A for the H2A variant HZT1 leading to transcriptional regulation of selected genes by chromatin remodeling. The INO80 complex remodels chromatin by shifting nucleosomes and is involved in DNA repair. Also involved in pre-rRNA processing. The polypeptide is RuvB-like helicase 2 (rvb2) (Schizosaccharomyces pombe (strain 972 / ATCC 24843) (Fission yeast)).